A 353-amino-acid chain; its full sequence is Dihydroorotate dehydrogenase (quinone) (353 aa).

FMN-binding positions include 67–71 (AGFDK) and Thr-91. Lys-71 contacts substrate. 116-120 (NRMGF) provides a ligand contact to substrate. Residues Asn-144 and Asn-177 each coordinate FMN. Residue Asn-177 participates in substrate binding. Ser-180 (nucleophile) is an active-site residue. Residue Asn-182 participates in substrate binding. Lys-215 and Thr-243 together coordinate FMN. 244-245 (NT) contributes to the substrate binding site. Residues Gly-264, Gly-293, and 314–315 (YT) contribute to the FMN site.

It belongs to the dihydroorotate dehydrogenase family. Type 2 subfamily. As to quaternary structure, monomer. Requires FMN as cofactor.

The protein localises to the cell membrane. The enzyme catalyses (S)-dihydroorotate + a quinone = orotate + a quinol. The protein operates within pyrimidine metabolism; UMP biosynthesis via de novo pathway; orotate from (S)-dihydroorotate (quinone route): step 1/1. Its function is as follows. Catalyzes the conversion of dihydroorotate to orotate with quinone as electron acceptor. The polypeptide is Dihydroorotate dehydrogenase (quinone) (Gloeobacter violaceus (strain ATCC 29082 / PCC 7421)).